Reading from the N-terminus, the 222-residue chain is MNVAILLAAGKGERMSENVPKQFLEIEGRMLFEYPLSTFLKSEAIDGVVIVTRREWFEVVEKRVFHEKVLGIVEGGDTRSQSVRSALEFLEKFSPSYVLVHDSARPFLRKKHVSEVLRRARETGAATLALKNSDALVRVENDRIEYIPRKGVYRILTPQAFSYEILKKAHENGGEWADDTEPVQKLGVKIALVEGDPLCFKVTFKEDLELARIIAREWERIP.

Belongs to the IspD/TarI cytidylyltransferase family. IspD subfamily.

It carries out the reaction 2-C-methyl-D-erythritol 4-phosphate + CTP + H(+) = 4-CDP-2-C-methyl-D-erythritol + diphosphate. It participates in isoprenoid biosynthesis; isopentenyl diphosphate biosynthesis via DXP pathway; isopentenyl diphosphate from 1-deoxy-D-xylulose 5-phosphate: step 2/6. Functionally, catalyzes the formation of 4-diphosphocytidyl-2-C-methyl-D-erythritol from CTP and 2-C-methyl-D-erythritol 4-phosphate (MEP). The protein is 2-C-methyl-D-erythritol 4-phosphate cytidylyltransferase of Thermotoga maritima (strain ATCC 43589 / DSM 3109 / JCM 10099 / NBRC 100826 / MSB8).